A 274-amino-acid chain; its full sequence is HTH-type transcriptional regulator GadX (274 aa).

Residues 145-242 (TRVCTVINNN…GMTPTEYQER (98 aa)) form the HTH araC/xylS-type domain. 2 consecutive DNA-binding regions (H-T-H motif) follow at residues 162–183 (ARIA…REEE) and 209–232 (IKRV…RNYY).

In terms of assembly, homodimer.

Functionally, positively regulates the expression of about fifteen genes involved in acid resistance such as gadA, gadB and gadC. Depending on the conditions (growth phase and medium), can repress gadW. The sequence is that of HTH-type transcriptional regulator GadX (gadX) from Escherichia coli O157:H7.